A 570-amino-acid chain; its full sequence is Dihydroxy-acid dehydratase (570 aa).

Cys-61 serves as a coordination point for [2Fe-2S] cluster. Residue Asp-94 coordinates Mg(2+). [2Fe-2S] cluster is bound at residue Cys-135. Positions 136 and 137 each coordinate Mg(2+). N6-carboxylysine is present on Lys-137. Cys-207 provides a ligand contact to [2Fe-2S] cluster. Position 459 (Glu-459) interacts with Mg(2+). Ser-485 (proton acceptor) is an active-site residue.

The protein belongs to the IlvD/Edd family. In terms of assembly, homodimer. [2Fe-2S] cluster serves as cofactor. The cofactor is Mg(2+).

The catalysed reaction is (2R)-2,3-dihydroxy-3-methylbutanoate = 3-methyl-2-oxobutanoate + H2O. The enzyme catalyses (2R,3R)-2,3-dihydroxy-3-methylpentanoate = (S)-3-methyl-2-oxopentanoate + H2O. It participates in amino-acid biosynthesis; L-isoleucine biosynthesis; L-isoleucine from 2-oxobutanoate: step 3/4. It functions in the pathway amino-acid biosynthesis; L-valine biosynthesis; L-valine from pyruvate: step 3/4. In terms of biological role, functions in the biosynthesis of branched-chain amino acids. Catalyzes the dehydration of (2R,3R)-2,3-dihydroxy-3-methylpentanoate (2,3-dihydroxy-3-methylvalerate) into 2-oxo-3-methylpentanoate (2-oxo-3-methylvalerate) and of (2R)-2,3-dihydroxy-3-methylbutanoate (2,3-dihydroxyisovalerate) into 2-oxo-3-methylbutanoate (2-oxoisovalerate), the penultimate precursor to L-isoleucine and L-valine, respectively. The polypeptide is Dihydroxy-acid dehydratase (Lactococcus lactis subsp. cremoris (strain MG1363)).